We begin with the raw amino-acid sequence, 419 residues long: UDP-N-acetylglucosamine 1-carboxyvinyltransferase 2 (419 aa).

A phosphoenolpyruvate-binding site is contributed by 24 to 25 (KN). UDP-N-acetyl-alpha-D-glucosamine is bound at residue R94. The Proton donor role is filled by C118. C118 bears the 2-(S-cysteinyl)pyruvic acid O-phosphothioketal mark. UDP-N-acetyl-alpha-D-glucosamine-binding positions include 123–127 (RPIDQ), D307, and I329.

This sequence belongs to the EPSP synthase family. MurA subfamily.

It localises to the cytoplasm. The enzyme catalyses phosphoenolpyruvate + UDP-N-acetyl-alpha-D-glucosamine = UDP-N-acetyl-3-O-(1-carboxyvinyl)-alpha-D-glucosamine + phosphate. The protein operates within cell wall biogenesis; peptidoglycan biosynthesis. In terms of biological role, cell wall formation. Adds enolpyruvyl to UDP-N-acetylglucosamine. The polypeptide is UDP-N-acetylglucosamine 1-carboxyvinyltransferase 2 (Staphylococcus epidermidis (strain ATCC 35984 / DSM 28319 / BCRC 17069 / CCUG 31568 / BM 3577 / RP62A)).